The sequence spans 131 residues: Maturin (131 aa).

The span at 107-120 shows a compositional bias: acidic residues; the sequence is FEEYNADVEEEEPE. The segment at 107-131 is disordered; that stretch reads FEEYNADVEEEEPEADHQQMGVSQQ.

It belongs to the MTURN family.

The protein localises to the cytoplasm. In terms of biological role, involved in early neuronal development; required for cell cycle exit and differentiation of primary neurons. Cooperates synergistically with pak3 to promote primary neural differentiation within the neural plate. May play a role in promoting megakaryocyte differentiation. The chain is Maturin (mturn) from Xenopus laevis (African clawed frog).